The primary structure comprises 597 residues: UvrABC system protein C (597 aa).

The GIY-YIG domain occupies 15-93 (DNPGVYQYYD…IKTLQPRYNV (79 aa)). The UVR domain maps to 207-242 (KESLKDFKKLMNNYAQNLQFEEAQKIKEKIEVLENY).

The protein belongs to the UvrC family. As to quaternary structure, interacts with UvrB in an incision complex.

It localises to the cytoplasm. Its function is as follows. The UvrABC repair system catalyzes the recognition and processing of DNA lesions. UvrC both incises the 5' and 3' sides of the lesion. The N-terminal half is responsible for the 3' incision and the C-terminal half is responsible for the 5' incision. The protein is UvrABC system protein C of Flavobacterium johnsoniae (strain ATCC 17061 / DSM 2064 / JCM 8514 / BCRC 14874 / CCUG 350202 / NBRC 14942 / NCIMB 11054 / UW101) (Cytophaga johnsonae).